The primary structure comprises 274 residues: Formamidopyrimidine-DNA glycosylase (274 aa).

The Schiff-base intermediate with DNA role is filled by Pro-2. The active-site Proton donor is the Glu-3. Lys-57 functions as the Proton donor; for beta-elimination activity in the catalytic mechanism. 3 residues coordinate DNA: His-90, Arg-109, and Lys-150. Residues 235-269 (FVYGRKDKACLICGHTIESIKQGQRSTFFCRHCQH) form an FPG-type zinc finger. Arg-259 functions as the Proton donor; for delta-elimination activity in the catalytic mechanism.

This sequence belongs to the FPG family. Monomer. It depends on Zn(2+) as a cofactor.

The enzyme catalyses Hydrolysis of DNA containing ring-opened 7-methylguanine residues, releasing 2,6-diamino-4-hydroxy-5-(N-methyl)formamidopyrimidine.. It carries out the reaction 2'-deoxyribonucleotide-(2'-deoxyribose 5'-phosphate)-2'-deoxyribonucleotide-DNA = a 3'-end 2'-deoxyribonucleotide-(2,3-dehydro-2,3-deoxyribose 5'-phosphate)-DNA + a 5'-end 5'-phospho-2'-deoxyribonucleoside-DNA + H(+). Functionally, involved in base excision repair of DNA damaged by oxidation or by mutagenic agents. Acts as a DNA glycosylase that recognizes and removes damaged bases. Has a preference for oxidized purines, such as 7,8-dihydro-8-oxoguanine (8-oxoG). Has AP (apurinic/apyrimidinic) lyase activity and introduces nicks in the DNA strand. Cleaves the DNA backbone by beta-delta elimination to generate a single-strand break at the site of the removed base with both 3'- and 5'-phosphates. The protein is Formamidopyrimidine-DNA glycosylase of Proteus mirabilis (strain HI4320).